The following is a 290-amino-acid chain: Phosphatidylglycerol--prolipoprotein diacylglyceryl transferase (290 aa).

7 helical membrane passes run 21–41 (VSLH…MWLA), 60–80 (LLYA…VLFY), 96–116 (WDGG…MFWF), 130–150 (FIAP…FING), 198–218 (SQLY…NLFI), 225–245 (GAVS…VEAF), and 258–278 (VISM…IMMI). Arg143 serves as a coordination point for a 1,2-diacyl-sn-glycero-3-phospho-(1'-sn-glycerol).

It belongs to the Lgt family.

The protein resides in the cell inner membrane. The catalysed reaction is L-cysteinyl-[prolipoprotein] + a 1,2-diacyl-sn-glycero-3-phospho-(1'-sn-glycerol) = an S-1,2-diacyl-sn-glyceryl-L-cysteinyl-[prolipoprotein] + sn-glycerol 1-phosphate + H(+). Its pathway is protein modification; lipoprotein biosynthesis (diacylglyceryl transfer). In terms of biological role, catalyzes the transfer of the diacylglyceryl group from phosphatidylglycerol to the sulfhydryl group of the N-terminal cysteine of a prolipoprotein, the first step in the formation of mature lipoproteins. The polypeptide is Phosphatidylglycerol--prolipoprotein diacylglyceryl transferase (Serratia proteamaculans (strain 568)).